Here is a 229-residue protein sequence, read N- to C-terminus: Cytochrome c oxidase subunit 2 (229 aa).

Topologically, residues 1–26 are mitochondrial intermembrane; it reads MSTWANLGLQDSASPLMEQLIFFHDH. Residues 27–48 traverse the membrane as a helical segment; sequence ALLILVMITVLVGYLMFMLFFN. At 49–62 the chain is on the mitochondrial matrix side; that stretch reads SYVNRFLLHGQLIE. Residues 63–82 form a helical membrane-spanning segment; the sequence is MIWTILPAIILLFIAMPSLR. Residues 83–229 lie on the Mitochondrial intermembrane side of the membrane; the sequence is LLYLLDEINE…IKWISNSVNS (147 aa). The Cu cation site is built by histidine 161, cysteine 196, glutamate 198, cysteine 200, histidine 204, and methionine 207. Glutamate 198 is a binding site for Mg(2+).

The protein belongs to the cytochrome c oxidase subunit 2 family. Component of the cytochrome c oxidase (complex IV, CIV), a multisubunit enzyme composed of a catalytic core of 3 subunits and several supernumerary subunits. The complex exists as a monomer or a dimer and forms supercomplexes (SCs) in the inner mitochondrial membrane with ubiquinol-cytochrome c oxidoreductase (cytochrome b-c1 complex, complex III, CIII). Requires Cu cation as cofactor.

It is found in the mitochondrion inner membrane. It catalyses the reaction 4 Fe(II)-[cytochrome c] + O2 + 8 H(+)(in) = 4 Fe(III)-[cytochrome c] + 2 H2O + 4 H(+)(out). Functionally, component of the cytochrome c oxidase, the last enzyme in the mitochondrial electron transport chain which drives oxidative phosphorylation. The respiratory chain contains 3 multisubunit complexes succinate dehydrogenase (complex II, CII), ubiquinol-cytochrome c oxidoreductase (cytochrome b-c1 complex, complex III, CIII) and cytochrome c oxidase (complex IV, CIV), that cooperate to transfer electrons derived from NADH and succinate to molecular oxygen, creating an electrochemical gradient over the inner membrane that drives transmembrane transport and the ATP synthase. Cytochrome c oxidase is the component of the respiratory chain that catalyzes the reduction of oxygen to water. Electrons originating from reduced cytochrome c in the intermembrane space (IMS) are transferred via the dinuclear copper A center (CU(A)) of subunit 2 and heme A of subunit 1 to the active site in subunit 1, a binuclear center (BNC) formed by heme A3 and copper B (CU(B)). The BNC reduces molecular oxygen to 2 water molecules using 4 electrons from cytochrome c in the IMS and 4 protons from the mitochondrial matrix. In Drosophila affinis (Fruit fly), this protein is Cytochrome c oxidase subunit 2 (mt:CoII).